The chain runs to 64 residues: MPKMKTDKGVQKRFKKTANGFKRKQAHLRHILTKKSTKRKRHLRAKCQVAKSDVPAIARQLPYA.

This sequence belongs to the bacterial ribosomal protein bL35 family.

The polypeptide is Large ribosomal subunit protein bL35 (Shewanella halifaxensis (strain HAW-EB4)).